The primary structure comprises 89 residues: Phosphocarrier protein HPr (89 aa).

The region spanning 1–88 (MLQRDTTIIN…ALIANRFGEG (88 aa)) is the HPr domain. The Pros-phosphohistidine intermediate role is filled by His-15.

The protein belongs to the HPr family.

Its subcellular location is the cytoplasm. Its function is as follows. General (non sugar-specific) component of the phosphoenolpyruvate-dependent sugar phosphotransferase system (sugar PTS). This major carbohydrate active-transport system catalyzes the phosphorylation of incoming sugar substrates concomitantly with their translocation across the cell membrane. The phosphoryl group from phosphoenolpyruvate (PEP) is transferred to the phosphoryl carrier protein HPr by enzyme I. Phospho-HPr then transfers it to the PTS EIIA domain. This Cupriavidus necator (strain ATCC 17699 / DSM 428 / KCTC 22496 / NCIMB 10442 / H16 / Stanier 337) (Ralstonia eutropha) protein is Phosphocarrier protein HPr (phbH).